Here is a 447-residue protein sequence, read N- to C-terminus: GTPase Der (447 aa).

EngA-type G domains are found at residues 3 to 167 and 181 to 354; these read PVIA…FAQR and IRLA…AAAM. GTP-binding positions include 9–16, 56–60, 119–122, 187–194, 234–238, and 299–302; these read GRPNVGKS, DTGGF, NKAE, DTAGI, and NKWD. A KH-like domain is found at 355 to 439; it reads SNLSTPKLTR…PLRIELRSGK (85 aa).

The protein belongs to the TRAFAC class TrmE-Era-EngA-EngB-Septin-like GTPase superfamily. EngA (Der) GTPase family. In terms of assembly, associates with the 50S ribosomal subunit.

GTPase that plays an essential role in the late steps of ribosome biogenesis. In Herminiimonas arsenicoxydans, this protein is GTPase Der.